The sequence spans 572 residues: MLKNPATKYRSFKPIDLTDRQWPSRTITRPPIWMSTDLRDGNQSLFEPMDAQRKMRMFKTLVQIGFKEIEVAFPSASQTDFNFVRELIEGGHIPDDVTIEVLTQARDDLIERTFESLRGVPRAIVHLYNATAPEFRKIVFNLEKSGVKELAQNAARTMKRIAATMPETQFTFQYSPEVFSGTEIEFAKEVCDAVFDIWEPTPEHKAIVNLPATVEMSTPNIYADQIEWMHRNLKRRDSLVISVHPHNDRGTAVAAAELAVMAGADRIEGCLFGNGERTGNVDLVTLALNLYTQGVDPGLDFSNINEVARTAEECTQLPIHPRHPYVGDLVFTAFSGSHQDAIKKGFAVQKPDAMWEVPYMPIDPADLGRTYDSVIRVNSQSGKGGIAYLLEQGYGVVLPRRLQVDFSSAVQRFTDDSGQEVTSAQIWELFQQEYVQNATPVHYVGHSLSERDGREHIKLTVDINGTRRVLNGAGNGPLDALMHAIGVPVRIQHYEERALTQGADARAVAVAEMAGADVTGSAFGVGIDANLVTASIRAVISGVNRAYARVNAQAKERFFEAAMNDATESVGV.

Residues 31–305 form the Pyruvate carboxyltransferase domain; the sequence is PIWMSTDLRD…DPGLDFSNIN (275 aa). Mg(2+)-binding residues include aspartate 40, histidine 244, histidine 246, and asparagine 280. The interval 437-572 is regulatory domain; the sequence is NATPVHYVGH…MNDATESVGV (136 aa).

The protein belongs to the alpha-IPM synthase/homocitrate synthase family. LeuA type 2 subfamily. Homodimer. Requires Mg(2+) as cofactor.

The protein localises to the cytoplasm. The catalysed reaction is 3-methyl-2-oxobutanoate + acetyl-CoA + H2O = (2S)-2-isopropylmalate + CoA + H(+). It functions in the pathway amino-acid biosynthesis; L-leucine biosynthesis; L-leucine from 3-methyl-2-oxobutanoate: step 1/4. In terms of biological role, catalyzes the condensation of the acetyl group of acetyl-CoA with 3-methyl-2-oxobutanoate (2-ketoisovalerate) to form 3-carboxy-3-hydroxy-4-methylpentanoate (2-isopropylmalate). This is 2-isopropylmalate synthase from Paraburkholderia xenovorans (strain LB400).